The chain runs to 108 residues: uncharacterized protein (108 aa).

2 helical membrane-spanning segments follow: residues 51–71 (VFAA…FCFL) and 86–106 (PLST…KSLL).

It is found in the membrane. This is an uncharacterized protein from Saccharomyces cerevisiae (strain ATCC 204508 / S288c) (Baker's yeast).